Consider the following 149-residue polypeptide: Placenta growth factor (149 aa).

An N-terminal signal peptide occupies residues 1–18 (MPTVRLFTCFLQLLTGLV). Asparagine 33 carries N-linked (GlcNAc...) asparagine glycosylation. 3 disulfides stabilise this stretch: cysteine 52–cysteine 94, cysteine 83–cysteine 128, and cysteine 87–cysteine 130. N-linked (GlcNAc...) asparagine glycosylation is present at asparagine 101.

Belongs to the PDGF/VEGF growth factor family. As to quaternary structure, antiparallel homodimer; disulfide-linked. Also found as heterodimer with VEGFA/VEGF.

The protein localises to the secreted. Functionally, growth factor active in angiogenesis and endothelial cell growth, stimulating their proliferation and migration. It binds to the receptor FLT1/VEGFR-1. Also promotes cell tumor growth. This Bos taurus (Bovine) protein is Placenta growth factor (PGF).